The following is a 248-amino-acid chain: uncharacterized protein (248 aa).

Residue Ile9–Val33 participates in NADP(+) binding. Substrate is bound at residue Ser141. The Proton acceptor role is filled by Tyr154.

Belongs to the short-chain dehydrogenases/reductases (SDR) family.

This is an uncharacterized protein from Listeria monocytogenes serovar 1/2a (strain ATCC BAA-679 / EGD-e).